The sequence spans 329 residues: DNA-directed RNA polymerase subunit alpha (329 aa).

The interval 1–235 is alpha N-terminal domain (alpha-NTD); sequence MQGSVTEFLK…EQLEAFVDLR (235 aa). Positions 249-329 are alpha C-terminal domain (alpha-CTD); it reads FDPILLRPVD…NWPPASIADE (81 aa).

The protein belongs to the RNA polymerase alpha chain family. As to quaternary structure, homodimer. The RNAP catalytic core consists of 2 alpha, 1 beta, 1 beta' and 1 omega subunit. When a sigma factor is associated with the core the holoenzyme is formed, which can initiate transcription.

The catalysed reaction is RNA(n) + a ribonucleoside 5'-triphosphate = RNA(n+1) + diphosphate. DNA-dependent RNA polymerase catalyzes the transcription of DNA into RNA using the four ribonucleoside triphosphates as substrates. This Shigella dysenteriae serotype 1 (strain Sd197) protein is DNA-directed RNA polymerase subunit alpha.